The following is a 195-amino-acid chain: MDINKLIAMFAKLPSFGPSSSRRIVLHLLRNKEEIMLPLASGIQDLAFQAKECPVCFNIDVKSPCSICSDTKRDHQLLCIVEELGDLWAFEKGKIYQGVYHVLGGTLSAIYGIGPDQLNLDSIVERIKKFNVQEVIIGIGNTMDGQVTTHYITQMVKELGIKVTRLACGIPMGGEIDYLDEGTLSAALSSRYIIS.

The C4-type zinc-finger motif lies at 53–68 (CPVCFNIDVKSPCSIC). In terms of domain architecture, Toprim spans 76–171 (QLLCIVEELG…KVTRLACGIP (96 aa)).

Belongs to the RecR family.

Functionally, may play a role in DNA repair. It seems to be involved in an RecBC-independent recombinational process of DNA repair. It may act with RecF and RecO. The chain is Recombination protein RecR from Ehrlichia chaffeensis (strain ATCC CRL-10679 / Arkansas).